We begin with the raw amino-acid sequence, 1154 residues long: Coiled-coil domain-containing protein 136 (1154 aa).

A disordered region spans residues 1–48; sequence MQAMEGEVLLPALYEEEEEEEEEEEEVEEEEEQVQKGGSVGSLSVNKH. Residues 14 to 32 are compositionally biased toward acidic residues; the sequence is YEEEEEEEEEEEEVEEEEE. Phosphoserine is present on Ser52. Coiled coils occupy residues 696 to 733 and 859 to 974; these read QAKQ…LQVQ and KLQA…RPSV. Residues 1031–1058 show a composition bias toward basic and acidic residues; sequence DGLAKEEEKKEEMEEEKKQVKEEAKEQC. Residues 1031–1131 form a disordered region; sequence DGLAKEEEKK…SSPTPNPPIF (101 aa). Acidic residues predominate over residues 1077-1109; that stretch reads DQEENEEDKEEEEKEEDSEEEEDDADSSLESPE. Residues 1130-1150 form a helical membrane-spanning segment; the sequence is IFSLPLVGLVVISALLWCWWA.

In terms of tissue distribution, expressed in gastric tissues. Down-regulated in gastric cancer.

The protein localises to the cytoplasmic vesicle. Its subcellular location is the secretory vesicle. The protein resides in the acrosome membrane. In terms of biological role, may play a role in acrosome formation in spermatogenesis and in fertilization. This is Coiled-coil domain-containing protein 136 (CCDC136) from Homo sapiens (Human).